The primary structure comprises 236 residues: Alpha-acetolactate decarboxylase (236 aa).

Belongs to the alpha-acetolactate decarboxylase family.

It catalyses the reaction (2S)-2-acetolactate + H(+) = (R)-acetoin + CO2. Its pathway is polyol metabolism; (R,R)-butane-2,3-diol biosynthesis; (R,R)-butane-2,3-diol from pyruvate: step 2/3. In terms of biological role, converts acetolactate into acetoin. This Lactococcus lactis subsp. cremoris (strain MG1363) protein is Alpha-acetolactate decarboxylase (aldB).